Here is a 283-residue protein sequence, read N- to C-terminus: Nucleoid occlusion protein (283 aa).

A disordered region spans residues 1–21 (MKHSFSRFFGFGEKEEEPEIA). The segment at residues 148 to 167 (EALAQRLGKGQSTIANKLRL) is a DNA-binding region (H-T-H motif).

It belongs to the ParB family.

It localises to the cytoplasm. The protein localises to the nucleoid. Its function is as follows. Effects nucleoid occlusion by binding relatively nonspecifically to DNA and preventing the assembly of the division machinery in the vicinity of the nucleoid, especially under conditions that disturb the cell cycle. It helps to coordinate cell division and chromosome segregation by preventing the formation of the Z ring through the nucleoid, which would cause chromosome breakage. This chain is Nucleoid occlusion protein, found in Bacillus velezensis (strain DSM 23117 / BGSC 10A6 / LMG 26770 / FZB42) (Bacillus amyloliquefaciens subsp. plantarum).